Reading from the N-terminus, the 1369-residue chain is MutS protein homolog 5 (1369 aa).

The disordered stretch occupies residues 138 to 190 (IYEDGTTEEGTSEDTVPTWDSSLAYSTDETTAEKEEKEEDEDDDDEGLPAKLN). Over residues 173 to 184 (EKEEDEDDDDEG) the composition is skewed to acidic residues. 639 to 646 (GPNACGKS) serves as a coordination point for ATP. 4 disordered regions span residues 880–915 (SMRN…SVLS), 935–1135 (KKKK…RSSN), 1153–1182 (LKSQ…HSQN), and 1248–1278 (NFIF…SSIS). The segment covering 884-894 (VSEEIEKERSE) has biased composition (basic and acidic residues). Polar residues-rich tracts occupy residues 895-915 (ASTP…SVLS) and 941-950 (TGSSMESSMS). Residues 954–967 (FQEEDEGTEGEEDQ) are compositionally biased toward acidic residues. Polar residues predominate over residues 991–1003 (QSINSRHSFSTRT). The span at 1024-1037 (STSTSSPGPSASKS) shows a compositional bias: low complexity. The span at 1049-1065 (VKESQVLETPKQLSISS) shows a compositional bias: polar residues. Residues 1073–1084 (SSEKDVISRVSE) show a composition bias toward basic and acidic residues. 2 stretches are compositionally biased toward polar residues: residues 1111–1124 (KNRS…QSAR) and 1153–1167 (LKSQ…TPRS). Residues 1254–1263 (PEPRSSEKQR) are compositionally biased toward basic and acidic residues.

The protein belongs to the DNA mismatch repair MutS family. As to quaternary structure, heterooligomer of him-14 and msh-5. Interacts with the brc-1-brd-1 heterodimer. Expressed in the germline.

It localises to the chromosome. Its function is as follows. Crucial component in meiotic recombination, functioning at some point after the initiation step of recombination. Plays a role in promoting the crossover outcome of meiotic recombination events. Required for formation of normal meiotic crossover, and crossover and chiasmata generated by artificially made DNA breaks. Together with him-14 and zhp-3 plays a role in the activation of DNA damage-dependent apoptosis at the DNA damage checkpoint in pachytene cells. This is MutS protein homolog 5 from Caenorhabditis elegans.